Reading from the N-terminus, the 651-residue chain is Mitogen-activated protein kinase kinase kinase 2 (651 aa).

The Protein kinase domain maps to 68 to 330; sequence WRKGQLIGRG…ASELLKHPFV (263 aa). ATP is bound by residues 74–82 and lysine 97; that span reads IGRGAFGTV. Positions 105–130 form a coiled coil; sequence CASKEKTQAHIQELEEEVKLLKNLSH. Residues lysine 108 and lysine 110 each participate in a glycyl lysine isopeptide (Lys-Gly) (interchain with G-Cter in ubiquitin) cross-link. The active-site Proton acceptor is the aspartate 196. Disordered regions lie at residues 460–483, 537–601, and 618–651; these read GNGETETKVSMEVDHPSYSEDENE, RGFL…VALS, and KRREITRQAGMGSSPRDRSLSRHREKSRFASPGK. Positions 464 to 477 are enriched in basic and acidic residues; it reads TETKVSMEVDHPSY. A compositionally biased stretch (polar residues) spans 570 to 599; it reads SPESGNSSGAPKNSNASAGAEQESNSQSVA. A coiled-coil region spans residues 605-628; sequence RKWKEELDQELERKRREITRQAGM.

It belongs to the protein kinase superfamily. STE Ser/Thr protein kinase family. MAP kinase kinase kinase subfamily. As to expression, expressed in roots and flowers.

It is found in the cytoplasm. The protein localises to the cytoskeleton. The enzyme catalyses L-seryl-[protein] + ATP = O-phospho-L-seryl-[protein] + ADP + H(+). The catalysed reaction is L-threonyl-[protein] + ATP = O-phospho-L-threonyl-[protein] + ADP + H(+). Functionally, involved in cortical microtubules organization and stabilization by regulating the phosphorylation state of microtubule-associated proteins such as MAP65-1. The chain is Mitogen-activated protein kinase kinase kinase 2 (ANP2) from Arabidopsis thaliana (Mouse-ear cress).